The sequence spans 334 residues: Protein-methionine-sulfoxide reductase catalytic subunit MsrP (334 aa).

A signal peptide (tat-type signal) is located at residues 1-44 (MKKIRPLTEADVTAESAFFMQRRQVLKALGISAAALSLPSTAQA). Residues N88, 91-92 (YE), C146, T181, N233, R238, and 249-251 (GIK) contribute to the Mo-molybdopterin site.

This sequence belongs to the MsrP family. As to quaternary structure, heterodimer of a catalytic subunit (MsrP) and a heme-binding subunit (MsrQ). Requires Mo-molybdopterin as cofactor. Predicted to be exported by the Tat system. The position of the signal peptide cleavage has not been experimentally proven.

It localises to the periplasm. It catalyses the reaction L-methionyl-[protein] + a quinone + H2O = L-methionyl-(S)-S-oxide-[protein] + a quinol. The enzyme catalyses L-methionyl-[protein] + a quinone + H2O = L-methionyl-(R)-S-oxide-[protein] + a quinol. In terms of biological role, part of the MsrPQ system that repairs oxidized periplasmic proteins containing methionine sulfoxide residues (Met-O), using respiratory chain electrons. Thus protects these proteins from oxidative-stress damage caused by reactive species of oxygen and chlorine generated by the host defense mechanisms. MsrPQ is essential for the maintenance of envelope integrity under bleach stress, rescuing a wide series of structurally unrelated periplasmic proteins from methionine oxidation, including the primary periplasmic chaperone SurA and the lipoprotein Pal. The catalytic subunit MsrP is non-stereospecific, being able to reduce both (R-) and (S-) diastereoisomers of methionine sulfoxide. This chain is Protein-methionine-sulfoxide reductase catalytic subunit MsrP, found in Salmonella dublin (strain CT_02021853).